A 166-amino-acid chain; its full sequence is Interferon gamma (166 aa).

A signal peptide spans 1–23 (MSYTTYFLAFQLCVTLCFSGSYC). Residue Gln24 is modified to Pyrrolidone carboxylic acid. Residues Asn39 and Asn106 are each glycosylated (N-linked (GlcNAc...) asparagine).

It belongs to the type II (or gamma) interferon family. Homodimer. Interacts with IFNGR1 (via extracellular domain); this interaction promotes IFNGR1 dimerization. In terms of tissue distribution, released primarily from activated T lymphocytes.

It localises to the secreted. Its function is as follows. Type II interferon produced by immune cells such as T-cells and NK cells that plays crucial roles in antimicrobial, antiviral, and antitumor responses by activating effector immune cells and enhancing antigen presentation. Primarily signals through the JAK-STAT pathway after interaction with its receptor IFNGR1 to affect gene regulation. Upon IFNG binding, IFNGR1 intracellular domain opens out to allow association of downstream signaling components JAK2, JAK1 and STAT1, leading to STAT1 activation, nuclear translocation and transcription of IFNG-regulated genes. Many of the induced genes are transcription factors such as IRF1 that are able to further drive regulation of a next wave of transcription. Plays a role in class I antigen presentation pathway by inducing a replacement of catalytic proteasome subunits with immunoproteasome subunits. In turn, increases the quantity, quality, and repertoire of peptides for class I MHC loading. Increases the efficiency of peptide generation also by inducing the expression of activator PA28 that associates with the proteasome and alters its proteolytic cleavage preference. Up-regulates as well MHC II complexes on the cell surface by promoting expression of several key molecules such as cathepsins B/CTSB, H/CTSH, and L/CTSL. Participates in the regulation of hematopoietic stem cells during development and under homeostatic conditions by affecting their development, quiescence, and differentiation. In Sus scrofa (Pig), this protein is Interferon gamma (IFNG).